The primary structure comprises 185 residues: Anterior gradient protein 2 (185 aa).

The first 18 residues, 1–18 (MQTGLSLACLVLLCSVLG), serve as a signal peptide directing secretion. Residues 25-45 (PKRQAGATDTNGAAKSEPAPV) form a disordered region.

This sequence belongs to the AGR family. Expressed in the anterior of the dorsal ectoderm from late gastrula stages onwards. Becomes restricted to the cement gland anlage at the onset of neurulation (stages 13 to 14) and expressed exclusively in the cement gland from stage 18 onwards, with transient expression in the hatching gland during tailbud stages.

The protein resides in the secreted. In terms of biological role, involved in cement gland formation; probably specifies dorsal ectoderm to acquire an anterior fate such as cement gland and forebrain. Signals via the FGF pathway. The polypeptide is Anterior gradient protein 2 (ag2) (Xenopus laevis (African clawed frog)).